A 592-amino-acid chain; its full sequence is Guanylate-binding protein 1 (592 aa).

The segment at 1-311 (MASEIHMTGP…NAISSGDLPC (311 aa)) is GTPase domain (Globular). In terms of domain architecture, GB1/RHD3-type G spans 35 to 278 (TQPMVVVAIV…FCSYIFSNSK (244 aa)). Residues 45 to 52 (GLYRTGKS), 67 to 69 (LGS), and 97 to 101 (DTEGL) each bind GTP. A Phosphoserine modification is found at Ser-156. Cys-589 bears the Cysteine methyl ester mark. A lipid anchor (S-farnesyl cysteine) is attached at Cys-589. At Thr-590 the chain carries Phosphothreonine. Residues 590–592 (TIS) constitute a propeptide, removed in mature form.

The protein belongs to the TRAFAC class dynamin-like GTPase superfamily. GB1/RHD3 GTPase family. GB1 subfamily. Homodimer; homodimerization occurs upon GTP-binding and is required for the second hydrolysis step from GDP to GMP. Undergoes conformational changes and oligomerization upon GTP-binding and hydrolysis. Heterodimer with other family members, including GBP2, GBP3, GBP4 and GBP5. Dimerization regulates subcellular location to membranous structures. Interacts with SQSTM1. Interacts (when phosphorylated) with 14-3-3 protein sigma (SFN); leading to GBP1 retention in the cytosol and inactivation. Isoprenylation is required for proper subcellular location. Post-translationally, phosphorylated at Ser-156 by PIM1 in absence of infection, inhibits GBP1: phosphorylation promotes interaction with 14-3-3 protein sigma (SFN), leading to GBP1 retention in the cytosol. Dephosphorylated in response to infection, liberating GBP1.

Its subcellular location is the cytoplasmic vesicle membrane. It is found in the golgi apparatus membrane. The protein resides in the cell membrane. It localises to the cytoplasm. The protein localises to the cytosol. Its subcellular location is the secreted. The enzyme catalyses GTP + H2O = GDP + phosphate + H(+). It carries out the reaction GDP + H2O = GMP + phosphate + H(+). Interferon (IFN)-inducible GTPase that plays important roles in innate immunity against a diverse range of bacterial, viral and protozoan pathogens. Hydrolyzes GTP to GMP in two consecutive cleavage reactions: GTP is first hydrolyzed to GDP and then to GMP in a processive manner. Following infection, recruited to the pathogen-containing vacuoles or vacuole-escaped bacteria and promotes both inflammasome assembly and autophagy. Acts as a positive regulator of inflammasome assembly by facilitating the detection of inflammasome ligands from pathogens. Involved in the lysis of pathogen-containing vacuoles, releasing pathogens into the cytosol. Following pathogen release in the cytosol, forms a protein coat in a GTPase-dependent manner that encapsulates pathogens and promotes the detection of ligands by pattern recognition receptors. Plays a key role in inflammasome assembly in response to infection by Gram-negative bacteria: following pathogen release in the cytosol, forms a protein coat that encapsulates Gram-negative bacteria and directly binds to lipopolysaccharide (LPS), disrupting the O-antigen barrier and unmasking lipid A that is that detected by the non-canonical inflammasome effector CASP4/CASP11. Also promotes recruitment of proteins that mediate bacterial cytolysis, leading to release double-stranded DNA (dsDNA) that activates the AIM2 inflammasome. Involved in autophagy by regulating bacteriolytic peptide generation via its interaction with ubiquitin-binding protein SQSTM1, which delivers monoubiquitinated proteins to autolysosomes for the generation of bacteriolytic peptides. Confers protection to several pathogens, including the bacterial pathogens L.monocytogenes and M.bovis BCG as well as the protozoan pathogen T.gondii. Exhibits antiviral activity against influenza virus. The sequence is that of Guanylate-binding protein 1 (GBP1) from Pongo abelii (Sumatran orangutan).